The following is a 159-amino-acid chain: Mesogenin-1 (159 aa).

The segment at 79–101 is disordered; the sequence is PGQARLPKGTKVRMSAQRRRKAS. The segment covering 86–100 has biased composition (basic residues); sequence KGTKVRMSAQRRRKA. The 55-residue stretch at 95-149 folds into the bHLH domain; the sequence is QRRRKASEREKLRMRTLADALHTLRNYLPPAYSQRGQPLTKIQTLKCTIKYISEL.

It is found in the nucleus. Its function is as follows. Involved in specifying the paraxial, but not dorsal, mesoderm. May regulate the expression of T-box transcription factors required for mesoderm formation and differentiation. The sequence is that of Mesogenin-1 (MSGN1) from Gallus gallus (Chicken).